A 486-amino-acid polypeptide reads, in one-letter code: MVEFKNIVKYFPDIDKPILDSINLKIGEVKIFTVVGKNGEGKSTLAKIIAGLIEFDEGEILVNGIKQKNWNVDKAKNNGIYLVSQVPNLKMNLRVWEYLSIYWFGYEFFMPMNKSKTYKYYRWLMQFYKISFDLDKKIKDLNIKEIYFLLIIAALKENAKIIIFDESAAYFSQKEAQAFIKLLVLLKKSGVASLFITHSEITDAIKFSDEFIILKDGKCFRTVNKESILSKLESSSDKVFVANINCNKFEKDPIKFNLFFEDFWKYDVSFSLNKRGVLGIIGEEAVIKTWEKLFLGELLFVGCIKIDGIRYERINIFECKAGFLPLGIGNLFPDNSSILDNFLAKFMNFENKIFIRQSYINQIKDFFKKKMEFYSEEKIYRILYSKSLAFSGGTLKKFALYREMYIAKSFLICFSPLSNLDHKAYNEMSVAIRNYSKEKPVLLITSNLDELLLLSDNILAMKMGEVLLNVSREKISKEKLKELLFL.

2 consecutive ABC transporter domains span residues 2 to 241 (VEFK…KVFV) and 249 to 486 (FEKD…LLFL). 36 to 43 (GKNGEGKS) contributes to the ATP binding site.

This sequence belongs to the ABC transporter superfamily.

This is an uncharacterized protein from Borreliella burgdorferi (strain ATCC 35210 / DSM 4680 / CIP 102532 / B31) (Borrelia burgdorferi).